Reading from the N-terminus, the 391-residue chain is Chalcone synthase (391 aa).

Cys-164 is an active-site residue.

This sequence belongs to the thiolase-like superfamily. Chalcone/stilbene synthases family.

The catalysed reaction is (E)-4-coumaroyl-CoA + 3 malonyl-CoA + 3 H(+) = 2',4,4',6'-tetrahydroxychalcone + 3 CO2 + 4 CoA. It functions in the pathway secondary metabolite biosynthesis; flavonoid biosynthesis. In terms of biological role, the primary product of this enzyme is 4,2',4',6'-tetrahydroxychalcone (also termed naringenin-chalcone or chalcone) which can under specific conditions spontaneously isomerize into naringenin. The protein is Chalcone synthase (CHS) of Dianthus caryophyllus (Carnation).